The following is a 263-amino-acid chain: Rhomboid-like protease 3 (263 aa).

Transmembrane regions (helical) follow at residues 37-57 (KSIVWITVAQIIMYIISCVLS), 86-106 (VVTPLFLHATILHLVLNLVFI), 121-141 (KFLVTYFLSAIVGNLLSMLMQ), 142-162 (PWALSVGASTAGFGIIGGMAA), 189-209 (LIYFLSFGRTVDTFGHLGGFL), and 231-251 (VLFYGCSALCATILVVSPPLL). Serine 150 functions as the Nucleophile in the catalytic mechanism. Histidine 204 is a catalytic residue.

Belongs to the peptidase S54 family.

It localises to the membrane. The catalysed reaction is Cleaves type-1 transmembrane domains using a catalytic dyad composed of serine and histidine that are contributed by different transmembrane domains.. In terms of biological role, serine protease involved in intramembrane proteolysis and the subsequent release of polypeptides from their membrane anchors. The polypeptide is Rhomboid-like protease 3 (ROM3) (Toxoplasma gondii).